The primary structure comprises 24 residues: L-amino-acid oxidase (24 aa).

It belongs to the flavin monoamine oxidase family. FIG1 subfamily. As to quaternary structure, homodimer; non-covalently linked. Requires FAD as cofactor. In terms of processing, N-glycosylated. Expressed by the venom gland.

It is found in the secreted. It catalyses the reaction an L-alpha-amino acid + O2 + H2O = a 2-oxocarboxylate + H2O2 + NH4(+). In terms of biological role, catalyzes an oxidative deamination of predominantly hydrophobic and aromatic L-amino acids, thus producing hydrogen peroxide that may contribute to the diverse toxic effects of this enzyme. Exhibits diverse biological activities, such as hemorrhage, hemolysis, edema, apoptosis, and antiparasitic activities. This protein has antibacterial activity (against E.coli, S.aureus, and B.dysenteriae), cytotoxic activity, as well as an ability to induce platelet aggregation. Effects of snake L-amino oxidases on platelets are controversial, since they either induce aggregation or inhibit agonist-induced aggregation. These different effects are probably due to different experimental conditions. In Protobothrops mucrosquamatus (Taiwan habu), this protein is L-amino-acid oxidase.